A 587-amino-acid polypeptide reads, in one-letter code: MKRSMYAGRVREEHIGQEITLKGWVGRRRDLGGLIFIDLRDREGIMQLVINPEKVSAEVMATAESLRSEFVIEVTGQVAAREQANDKLPTGAVELNVTALIVLNTAKTTPFEIKDGIEANDDTRLRYRYLDLRRPEMLENLKLRAKVTHSIRNYLDELEFIDVETPFLSKSTPEGARDYLVPSRVNKGHFYALPQSPQITKQLLMNAGFDRYYQIVKCFRDEDLRGDRQPEFTQVDLETSFLTEQEIQDITESLIARVMKETKGIEVTLPFPRMKYDDAMALYGSDKPDTRFDMLLQDLTEVVRGVDFKVFSEAPAVKAIVVTGAADNYSRKDIDKMTEVAKQYGAKGLAWVKVVDGELNGPVAKFLTGIQEELTTALVLEDKDLVLFVADTLEVANATLGALRGRIAKELGLIDNDKFNFLWVVDWPMFEWSEEEGRYMSAHHPFTLPQEETAHELEGDLAKVRAIAYDIVLNGYELGGGSLRINQKDLQERMFKALGFSTEEANDQFGFLLEAMDYGFPPHGGLAIGLDRFVMLLAGEENIREVIAFPKNNKATDPMTQAPSTVALKQLEELSLQVEEDETNKTN.

Glu174 lines the L-aspartate pocket. An aspartate region spans residues 198 to 201; sequence QITK. Arg220 contributes to the L-aspartate binding site. Residues 220 to 222 and Gln229 each bind ATP; that span reads RDE. His443 lines the L-aspartate pocket. Glu477 lines the ATP pocket. Residue Arg484 coordinates L-aspartate. 529–532 is an ATP binding site; that stretch reads GLDR.

It belongs to the class-II aminoacyl-tRNA synthetase family. Type 1 subfamily. As to quaternary structure, homodimer.

The protein resides in the cytoplasm. The enzyme catalyses tRNA(Asp) + L-aspartate + ATP = L-aspartyl-tRNA(Asp) + AMP + diphosphate. Catalyzes the attachment of L-aspartate to tRNA(Asp) in a two-step reaction: L-aspartate is first activated by ATP to form Asp-AMP and then transferred to the acceptor end of tRNA(Asp). The sequence is that of Aspartate--tRNA ligase from Streptococcus pneumoniae serotype 4 (strain ATCC BAA-334 / TIGR4).